The sequence spans 300 residues: MQRIQLAEDLQFSRVIHGLWRLNEWNYSDAELLSLIEWCIDHGITTFDHADIYGGYTCEKLFGNALALSPGLRENIELVTKCGIVLESPERPAHRSHHYNTSKSHILASVEQSLMNLRTDYIDMLLIHRPDPLMDPEGVAEAFQALKCSGKVRYFGVSNFKDHQYRMLESYLPEKLVTNQIELSAYELENMLDGTLNLCQEKRIPPMAWSPLAGGKVFTENTDKDRRVRTALESVQGEIGAASLDEVMYAWLYTHPAGIMPIVGSGKRERISAAINALSYKLDQDQWFRIFTAVQGYDIP.

Tyrosine 53 serves as the catalytic Proton donor. 210 to 220 (SPLAGGKVFTE) contacts NADP(+).

Belongs to the aldo/keto reductase family. Aldo/keto reductase 2 subfamily.

This is an uncharacterized protein from Bacillus subtilis (strain 168).